Here is a 225-residue protein sequence, read N- to C-terminus: Ribosome maturation factor RimM (225 aa).

Positions 144-225 (ADEFYWVDLI…RIVVDWEADY (82 aa)) constitute a PRC barrel domain.

The protein belongs to the RimM family. Binds ribosomal protein uS19.

The protein resides in the cytoplasm. In terms of biological role, an accessory protein needed during the final step in the assembly of 30S ribosomal subunit, possibly for assembly of the head region. Essential for efficient processing of 16S rRNA. May be needed both before and after RbfA during the maturation of 16S rRNA. It has affinity for free ribosomal 30S subunits but not for 70S ribosomes. The polypeptide is Ribosome maturation factor RimM (Burkholderia lata (strain ATCC 17760 / DSM 23089 / LMG 22485 / NCIMB 9086 / R18194 / 383)).